The sequence spans 232 residues: Phosphatidylserine decarboxylase proenzyme (232 aa).

The active-site Schiff-base intermediate with substrate; via pyruvic acid is the Ser190. Position 190 is a pyruvic acid (Ser); by autocatalysis (Ser190).

The protein belongs to the phosphatidylserine decarboxylase family. PSD-A subfamily. In terms of assembly, heterodimer of a large membrane-associated beta subunit and a small pyruvoyl-containing alpha subunit. It depends on pyruvate as a cofactor. Post-translationally, is synthesized initially as an inactive proenzyme. Formation of the active enzyme involves a self-maturation process in which the active site pyruvoyl group is generated from an internal serine residue via an autocatalytic post-translational modification. Two non-identical subunits are generated from the proenzyme in this reaction, and the pyruvate is formed at the N-terminus of the alpha chain, which is derived from the carboxyl end of the proenzyme. The post-translation cleavage follows an unusual pathway, termed non-hydrolytic serinolysis, in which the side chain hydroxyl group of the serine supplies its oxygen atom to form the C-terminus of the beta chain, while the remainder of the serine residue undergoes an oxidative deamination to produce ammonia and the pyruvoyl prosthetic group on the alpha chain.

It localises to the cell membrane. The enzyme catalyses a 1,2-diacyl-sn-glycero-3-phospho-L-serine + H(+) = a 1,2-diacyl-sn-glycero-3-phosphoethanolamine + CO2. It participates in phospholipid metabolism; phosphatidylethanolamine biosynthesis; phosphatidylethanolamine from CDP-diacylglycerol: step 2/2. In terms of biological role, catalyzes the formation of phosphatidylethanolamine (PtdEtn) from phosphatidylserine (PtdSer). This is Phosphatidylserine decarboxylase proenzyme from Allorhizobium ampelinum (strain ATCC BAA-846 / DSM 112012 / S4) (Agrobacterium vitis (strain S4)).